The following is a 443-amino-acid chain: Transcriptional adapter 2-alpha (443 aa).

The residue at position 6 (Pro-6) is a Phosphoserine; in variant Ser-6. The ZZ-type zinc finger occupies 12–69 (SDKPPCRGCSSYLMEPYIKCAECGPPPFFLCLQCFTRGFEYKKHQSDHTYEIMTSDFP). Zn(2+) contacts are provided by Cys-17, Cys-20, Cys-31, Cys-34, Cys-42, Cys-45, His-55, and His-59. The region spanning 70–122 (VLDPSWTAQEEMALLEAVMDCGFGNWQDVANQMCTKTKEECEKHYMKHFINNP) is the SANT domain. Residues Lys-132 and Lys-138 each participate in a glycyl lysine isopeptide (Lys-Gly) (interchain with G-Cter in SUMO2) cross-link. Positions 348-372 (SPSIPMASNSGRRSAPPLNLTGLPG) are disordered. One can recognise an SWIRM domain in the interval 356-443 (NSGRRSAPPL…LIREGYITKG (88 aa)). The DNA-binding element occupies 426 to 435 (KTRKIYDFLI).

As to quaternary structure, interacts with GCN5 and NR3C1. Associated with the P/CAF protein in the PCAF complex. Component of the PCAF complex, at least composed of TADA2L/ADA2, TADA3L/ADA3, TAF5L/PAF65-beta, TAF6L/PAF65-alpha, TAF10/TAFII30, TAF12/TAFII20, TAF9/TAFII31 and TRRAP. Component of the ADA2A-containing complex (ATAC), composed of KAT14, KAT2A, TADA2L, TADA3L, ZZ3, MBIP, WDR5, YEATS2, CCDC101 and DR1. Interacts with CCDC134. In terms of tissue distribution, expressed in all tissues, but most abundantly in testis.

It localises to the nucleus. The protein localises to the chromosome. Component of the ATAC complex, a complex with histone acetyltransferase activity on histones H3 and H4. Required for the function of some acidic activation domains, which activate transcription from a distant site. Binds double-stranded DNA. Binds dinucleosomes, probably at the linker region between neighboring nucleosomes. Plays a role in chromatin remodeling. May promote TP53/p53 'Lys-321' acetylation, leading to reduced TP53 stability and transcriptional activity. May also promote XRCC6 acetylation thus facilitating cell apoptosis in response to DNA damage. The protein is Transcriptional adapter 2-alpha (TADA2A) of Homo sapiens (Human).